A 254-amino-acid polypeptide reads, in one-letter code: Phosphomannomutase (254 aa).

Asp19 serves as the catalytic Nucleophile. The Mg(2+) site is built by Asp19 and Asp21. Catalysis depends on Asp21, which acts as the Proton donor/acceptor. Alpha-D-mannose 1-phosphate contacts are provided by Arg28, Arg130, Arg141, Arg148, Ser186, and Asp188. Mg(2+) contacts are provided by Asp216, Phe228, Asp230, and Thr233. At Ser240 the chain carries Phosphoserine.

This sequence belongs to the eukaryotic PMM family. In terms of assembly, homodimer.

It is found in the cytoplasm. The catalysed reaction is alpha-D-mannose 1-phosphate = D-mannose 6-phosphate. The protein operates within nucleotide-sugar biosynthesis; GDP-alpha-D-mannose biosynthesis; alpha-D-mannose 1-phosphate from D-fructose 6-phosphate: step 2/2. Involved in the synthesis of the GDP-mannose and dolichol-phosphate-mannose required for a number of critical mannosyl transfer reactions such as folding and glycosylation of secretory proteins in the ER lumen. The protein is Phosphomannomutase of Saccharomyces cerevisiae (strain ATCC 204508 / S288c) (Baker's yeast).